Consider the following 102-residue polypeptide: NADH-quinone oxidoreductase subunit K (102 aa).

The next 3 membrane-spanning stretches (helical) occupy residues 5-25 (LGHY…GIFL), 30-50 (IIVI…NLVA), and 62-82 (VFAL…LAVL).

It belongs to the complex I subunit 4L family. NDH-1 is composed of 14 different subunits. Subunits NuoA, H, J, K, L, M, N constitute the membrane sector of the complex.

The protein localises to the cell inner membrane. It carries out the reaction a quinone + NADH + 5 H(+)(in) = a quinol + NAD(+) + 4 H(+)(out). Its function is as follows. NDH-1 shuttles electrons from NADH, via FMN and iron-sulfur (Fe-S) centers, to quinones in the respiratory chain. The immediate electron acceptor for the enzyme in this species is believed to be ubiquinone. Couples the redox reaction to proton translocation (for every two electrons transferred, four hydrogen ions are translocated across the cytoplasmic membrane), and thus conserves the redox energy in a proton gradient. In Bradyrhizobium sp. (strain BTAi1 / ATCC BAA-1182), this protein is NADH-quinone oxidoreductase subunit K.